The chain runs to 723 residues: Nuclear hormone receptor HR96 (723 aa).

A DNA-binding region (nuclear receptor) is located at residues 4-79 (PKNCAVCGDK…IGMKSENIMS (76 aa)). 2 consecutive NR C4-type zinc fingers follow at residues 7-27 (CAVC…CESC) and 43-67 (CPFN…LRKC). The segment at 95–163 (AKRRLMENGT…QASSPGTQVN (69 aa)) is disordered. Polar residues-rich tracts occupy residues 122–142 (DSSS…SCGS) and 151–163 (SGRQ…TQVN). One can recognise an NR LBD domain in the interval 483-723 (EQMKLRELRL…LREIFDLKNH (241 aa)).

Belongs to the nuclear hormone receptor family. NR1 subfamily.

It is found in the nucleus. Functionally, binds selectively to the HSP27 20E response element. The chain is Nuclear hormone receptor HR96 (Hr96) from Drosophila melanogaster (Fruit fly).